The sequence spans 236 residues: Phosphoribosylaminoimidazole-succinocarboxamide synthase (236 aa).

Belongs to the SAICAR synthetase family.

It carries out the reaction 5-amino-1-(5-phospho-D-ribosyl)imidazole-4-carboxylate + L-aspartate + ATP = (2S)-2-[5-amino-1-(5-phospho-beta-D-ribosyl)imidazole-4-carboxamido]succinate + ADP + phosphate + 2 H(+). Its pathway is purine metabolism; IMP biosynthesis via de novo pathway; 5-amino-1-(5-phospho-D-ribosyl)imidazole-4-carboxamide from 5-amino-1-(5-phospho-D-ribosyl)imidazole-4-carboxylate: step 1/2. The chain is Phosphoribosylaminoimidazole-succinocarboxamide synthase from Chlorobium phaeobacteroides (strain BS1).